Reading from the N-terminus, the 835-residue chain is Replication origin-binding protein (835 aa).

Residues 54–215 (PGMSQTRPVT…SGLRGDENIH (162 aa)) form the Helicase ATP-binding domain. 67–74 (APMGSGKT) provides a ligand contact to ATP.

Belongs to the herpesviridae OriBP family. Homodimer. Interacts with the major DNA-binding protein. Interacts with the helicase/primase component 52 and the polymerase accessory protein.

It is found in the host nucleus. Functionally, functions as a docking protein to recruit essential components of the viral replication machinery to viral DNA origins. In the presence of the major DNA-binding protein, opens dsDNA leading to a conformational change in the origin that facilitates DNA unwinding and subsequent replication. The polypeptide is Replication origin-binding protein (Varicella-zoster virus (strain Oka vaccine) (HHV-3)).